A 700-amino-acid polypeptide reads, in one-letter code: MSESVQEAKSALSKIRNIGITAHIDAGKTTTTERILYYTGVSHKIGEVHEGNTTTDYMAQERERGITITSAAVTCEWNDHRINIIDTPGHIDFNIEVNRSLRVLDGAIFVIEGVAGVQPQSETNWRLADRYNVPRIIFINKLDRTGADFYYAFSTLKEKLDIVAVPLQLPIGAEENFIGVVDLVEMRAIVWEGGELGAKFHYEEIPDDLKEKAAEARQTLLDTALAMDDAAMEEYFEKGDVDVAILKKCIKKGAISGEFRPVMCGTAFKNKGVQPLLDAVIDYLPAPDEVEGIRIAPPEGEEVDEDFLPIVPVDPDGKFAGLAFKIISDKYGTLTFVRVYRGVLNSGDTILNTTKGHKERVGRMFQMHADKRQEVKSVGAGDIAAFVGLKDTVTGDTLADAADPVVLERMQFPVPVIDISVEPKTKDAVEKMTLALQKLTAEDPSLHLKTDQETGQTILSGMGELHLDIIVDRLRREYGVDANIGAPQVAYRETITKPHVETYTHKKQSGGSGQFAEVKIEFAPSEKPDEIIFENKVVGGTVPKEYIPAVEKGIRMQSTTGVLAGFPTVDFKFTLLDGKYHDVDSSALAFEIAAKACFREGMKNAGPVILEPIMDVEITTPNDHVGDVVGDLNRRRGIIQNQETAGSTVMIRAQVPLKEMFGYISHLRSATKGRASFTMQFHHYDPVPRNVAEEIIAKSA.

Positions 13–288 constitute a tr-type G domain; it reads SKIRNIGITA…AVIDYLPAPD (276 aa). Residues 22–29, 86–90, and 140–143 each bind GTP; these read AHIDAGKT, DTPGH, and NKLD.

Belongs to the TRAFAC class translation factor GTPase superfamily. Classic translation factor GTPase family. EF-G/EF-2 subfamily.

It localises to the cytoplasm. Functionally, catalyzes the GTP-dependent ribosomal translocation step during translation elongation. During this step, the ribosome changes from the pre-translocational (PRE) to the post-translocational (POST) state as the newly formed A-site-bound peptidyl-tRNA and P-site-bound deacylated tRNA move to the P and E sites, respectively. Catalyzes the coordinated movement of the two tRNA molecules, the mRNA and conformational changes in the ribosome. This is Elongation factor G from Gluconobacter oxydans (strain 621H) (Gluconobacter suboxydans).